A 153-amino-acid chain; its full sequence is Pheromone-binding protein Gp-9 (153 aa).

A signal peptide spans 1–19; that stretch reads MKTFVLHIFIFALVAFASA. 3 disulfides stabilise this stretch: cysteine 37–cysteine 77, cysteine 73–cysteine 129, and cysteine 118–cysteine 138.

It belongs to the PBP/GOBP family. As to quaternary structure, homodimer.

It localises to the secreted. Colony queen number, a major feature of social organization, is associated with worker genotype for Gp-9. Colonies are headed by either a single reproductive queen (monogyne form) or multiple queens (polygyne form). Differences in worker Gp-9 genotypes between social forms may cause differences in workers' abilities to recognize queens and regulate their numbers. In Solenopsis daguerrei (Workerless parasitic ant), this protein is Pheromone-binding protein Gp-9.